Consider the following 678-residue polypeptide: Protein CASP (678 aa).

At 1–619 the chain is on the cytoplasmic side; sequence MAANVGSMFQ…LVLSNKMART (619 aa). Coiled-coil stretches lie at residues 67–450 and 502–556; these read LLKS…QDLS and LSII…FLQS. Serine 586 bears the Phosphoserine mark. A helical; Anchor for type IV membrane protein transmembrane segment spans residues 620 to 640; it reads IGFFYTLFLHCLVFLVLYKLA. The Lumenal segment spans residues 641–678; sequence WSESMERDCATFCAKKFADHLHKFHENDNGAAAGDLWQ.

It belongs to the CASP family. As to quaternary structure, homodimer; disulfide-linked. Interacts with GOLGA5.

It localises to the golgi apparatus membrane. Its function is as follows. May be involved in intra-Golgi retrograde transport. The protein is Protein CASP (CUTL1) of Pongo abelii (Sumatran orangutan).